The primary structure comprises 472 residues: RNA pseudouridine synthase 6, chloroplastic (472 aa).

Residues 1-66 (MASPALTGGY…TDSQNQTTLS (66 aa)) constitute a chloroplast transit peptide. The 108-residue stretch at 101-208 (VLVSEFISKQ…SPRCYEIDWK (108 aa)) folds into the S4 RNA-binding domain. Residue D261 is part of the active site.

It belongs to the pseudouridine synthase RluA family.

It localises to the plastid. Its subcellular location is the chloroplast. It catalyses the reaction a uridine in RNA = a pseudouridine in RNA. This is RNA pseudouridine synthase 6, chloroplastic from Arabidopsis thaliana (Mouse-ear cress).